We begin with the raw amino-acid sequence, 303 residues long: Di/tripeptide transport system permease protein DppC (303 aa).

The next 7 helical transmembrane spans lie at 33 to 53, 103 to 123, 131 to 151, 152 to 172, 202 to 222, 225 to 245, and 267 to 287; these read ALGG…APWV, LLIG…LGLL, AGPL…LLLA, VAIV…IAIV, AGTL…PLIV, TLSF…GLGV, and WWVV…INLM. Residues 99-288 form the ABC transmembrane type-1 domain; that stretch reads ARLSLLIGLS…LSVLAINLMG (190 aa).

The protein belongs to the binding-protein-dependent transport system permease family. OppBC subfamily. In terms of assembly, the complex is composed of two ATP-binding proteins (DppD and DppF), two transmembrane proteins (DppB and DppC) and a solute-binding protein (DppA1-A5). Five orthologous SBPs (DppA1-A5) are present in P.aeruginosa, which increases the substrate specificity of the DppBCDF transporter.

The protein localises to the cell inner membrane. Part of the ABC transporter DppABCDF involved in the uptake of various di/tripeptides. Is also involved in the uptake of phaseolotoxin, a toxic tripeptide inhibiting the enzyme ornithine carbamoyltransferase. Responsible for the translocation of the substrate across the membrane. The polypeptide is Di/tripeptide transport system permease protein DppC (Pseudomonas aeruginosa (strain UCBPP-PA14)).